A 592-amino-acid polypeptide reads, in one-letter code: Putative esterase (592 aa).

A helical transmembrane segment spans residues 12-32 (LTLIAYLSVLMGVSVYFYVLI). N-linked (GlcNAc...) asparagine; by host glycans are attached at residues Asn68, Asn83, Asn95, Asn447, and Asn510. Catalysis depends on His513, which acts as the Charge relay system. Asn528 carries N-linked (GlcNAc...) asparagine; by host glycosylation.

Belongs to the type-B carboxylesterase/lipase family.

It localises to the membrane. The enzyme catalyses a carboxylic ester + H2O = an alcohol + a carboxylate + H(+). The chain is Putative esterase from Spodoptera frugiperda (Fall armyworm).